We begin with the raw amino-acid sequence, 361 residues long: Putative agmatine deiminase (361 aa).

The Amidino-cysteine intermediate role is filled by cysteine 354.

The protein belongs to the agmatine deiminase family.

It carries out the reaction agmatine + H2O = N-carbamoylputrescine + NH4(+). The polypeptide is Putative agmatine deiminase (Streptococcus pneumoniae (strain ATCC 700669 / Spain 23F-1)).